The sequence spans 114 residues: Abscisic stress-ripening protein 2 (114 aa).

2 disordered regions span residues 1-25 and 88-114; these read MAEEKHQHHHHLFHHKNKEDEGGPV and FHEHHQKKDAKKEKKEVEGGHHHHHHY. The segment covering 7–16 has biased composition (basic residues); it reads QHHHHLFHHK. A compositionally biased stretch (basic and acidic residues) spans 97 to 107; that stretch reads AKKEKKEVEGG.

This sequence belongs to the abscisic acid and water stress-induced protein family.

The sequence is that of Abscisic stress-ripening protein 2 from Solanum lycopersicum (Tomato).